Consider the following 256-residue polypeptide: uncharacterized protein (256 aa).

An S4 RNA-binding domain is found at 16–83 (VRLQKILSRA…DSLVYLALNK (68 aa)). The Nucleophile role is filled by D121.

The protein belongs to the pseudouridine synthase RsuA family.

It catalyses the reaction a uridine in RNA = a pseudouridine in RNA. This is an uncharacterized protein from Mycobacterium leprae (strain TN).